We begin with the raw amino-acid sequence, 268 residues long: MMQALTNPFPIGSSSLIHCMTNEISCEMLANGILALGCKPVMADDPREVLDFTKQSQALFINLGHLSAEKEKAIRMAALYANQSSLPMVVDAVGVTTSSIRKSLVKDLLDYRPTVLKGNMSEIRSLVGLKHHGVGVDASAKDQETEDLLQVLKDWCQTYPGMSFLVTGPKDLVVSKNQVAVLENGCTELDWITGTGDLVGALTAVFLSQGKTGFEASCLAVSYLNIAAEKIVVQGMGLEEFRYQVLNQLSLLRRDENWLDTIKGEAYE.

Residue Met-42 participates in substrate binding. Residues Lys-117 and Thr-167 each contribute to the ATP site. Gly-194 is a binding site for substrate.

This sequence belongs to the Thz kinase family. Requires Mg(2+) as cofactor.

It carries out the reaction 5-(2-hydroxyethyl)-4-methylthiazole + ATP = 4-methyl-5-(2-phosphooxyethyl)-thiazole + ADP + H(+). Its pathway is cofactor biosynthesis; thiamine diphosphate biosynthesis; 4-methyl-5-(2-phosphoethyl)-thiazole from 5-(2-hydroxyethyl)-4-methylthiazole: step 1/1. Functionally, catalyzes the phosphorylation of the hydroxyl group of 4-methyl-5-beta-hydroxyethylthiazole (THZ). The sequence is that of Hydroxyethylthiazole kinase 2 from Streptococcus pneumoniae (strain CGSP14).